The chain runs to 674 residues: UvrABC system protein B (674 aa).

Residues 26-183 form the Helicase ATP-binding domain; sequence EGLEDGLAHQ…RRLAELQYTR (158 aa). 39–46 contributes to the ATP binding site; that stretch reads GVTGSGKT. The short motif at 92–115 is the Beta-hairpin element; it reads YYDYYQPEAYVPSSDTFIEKDASV. One can recognise a Helicase C-terminal domain in the interval 431 to 597; that stretch reads QVDDLLSEIR…GLNKKISDIL (167 aa). The UVR domain maps to 634 to 669; that stretch reads QKRIHQLEAQMQQHAQNLEFEEAAQVRDQLHQVREL.

Belongs to the UvrB family. In terms of assembly, forms a heterotetramer with UvrA during the search for lesions. Interacts with UvrC in an incision complex.

The protein resides in the cytoplasm. Functionally, the UvrABC repair system catalyzes the recognition and processing of DNA lesions. A damage recognition complex composed of 2 UvrA and 2 UvrB subunits scans DNA for abnormalities. Upon binding of the UvrA(2)B(2) complex to a putative damaged site, the DNA wraps around one UvrB monomer. DNA wrap is dependent on ATP binding by UvrB and probably causes local melting of the DNA helix, facilitating insertion of UvrB beta-hairpin between the DNA strands. Then UvrB probes one DNA strand for the presence of a lesion. If a lesion is found the UvrA subunits dissociate and the UvrB-DNA preincision complex is formed. This complex is subsequently bound by UvrC and the second UvrB is released. If no lesion is found, the DNA wraps around the other UvrB subunit that will check the other stand for damage. The chain is UvrABC system protein B from Erwinia tasmaniensis (strain DSM 17950 / CFBP 7177 / CIP 109463 / NCPPB 4357 / Et1/99).